Consider the following 87-residue polypeptide: uncharacterized protein (87 aa).

Positions 1-19 (MLVLQLAVLVTAVYAFVHA) are cleaved as a signal peptide. A helical membrane pass occupies residues 51–71 (ILGFVFGVLGIVIAACAAGVY).

The protein to M.tuberculosis Rv0476.

It localises to the membrane. This is an uncharacterized protein from Mycobacterium leprae (strain TN).